The sequence spans 163 residues: MRVAVFPGSFDPITWGHIDLIKRSLAIFDKVIVLVAKNKSKKYFLSDIERFSLTKDVISSLNFSNVLVDRYSGFIVDYALINSIKFIVRGIRAFNDFDIEFERYLVNNKLNFEIDTIFLPSSAEHLYVRSDFVKELMLKKDVDLSNFVPELVFNRLKSKFIDK.

S9 provides a ligand contact to substrate. ATP-binding positions include 9–10 and H17; that span reads SF. K41, I75, and R89 together coordinate substrate. ATP contacts are provided by residues 90–92, E100, and 125–131; these read GIR and HLYVRSD.

This sequence belongs to the bacterial CoaD family. In terms of assembly, homohexamer. Mg(2+) is required as a cofactor.

Its subcellular location is the cytoplasm. The enzyme catalyses (R)-4'-phosphopantetheine + ATP + H(+) = 3'-dephospho-CoA + diphosphate. Its pathway is cofactor biosynthesis; coenzyme A biosynthesis; CoA from (R)-pantothenate: step 4/5. Reversibly transfers an adenylyl group from ATP to 4'-phosphopantetheine, yielding dephospho-CoA (dPCoA) and pyrophosphate. This is Phosphopantetheine adenylyltransferase from Borreliella burgdorferi (strain ZS7) (Borrelia burgdorferi).